The primary structure comprises 382 residues: Dual-specificity RNA methyltransferase RlmN (382 aa).

Glutamate 96 serves as the catalytic Proton acceptor. A Radical SAM core domain is found at 102–342 (QGKRGTLCVS…VRTTRGEDID (241 aa)). A disulfide bond links cysteine 109 and cysteine 345. Residues cysteine 116, cysteine 120, and cysteine 123 each coordinate [4Fe-4S] cluster. Residues 170-171 (GE), serine 202, 224-226 (SLH), and asparagine 302 each bind S-adenosyl-L-methionine. The S-methylcysteine intermediate role is filled by cysteine 345.

The protein belongs to the radical SAM superfamily. RlmN family. It depends on [4Fe-4S] cluster as a cofactor.

The protein resides in the cytoplasm. It carries out the reaction adenosine(2503) in 23S rRNA + 2 reduced [2Fe-2S]-[ferredoxin] + 2 S-adenosyl-L-methionine = 2-methyladenosine(2503) in 23S rRNA + 5'-deoxyadenosine + L-methionine + 2 oxidized [2Fe-2S]-[ferredoxin] + S-adenosyl-L-homocysteine. It catalyses the reaction adenosine(37) in tRNA + 2 reduced [2Fe-2S]-[ferredoxin] + 2 S-adenosyl-L-methionine = 2-methyladenosine(37) in tRNA + 5'-deoxyadenosine + L-methionine + 2 oxidized [2Fe-2S]-[ferredoxin] + S-adenosyl-L-homocysteine. Functionally, specifically methylates position 2 of adenine 2503 in 23S rRNA and position 2 of adenine 37 in tRNAs. m2A2503 modification seems to play a crucial role in the proofreading step occurring at the peptidyl transferase center and thus would serve to optimize ribosomal fidelity. The protein is Dual-specificity RNA methyltransferase RlmN of Pseudomonas fluorescens (strain ATCC BAA-477 / NRRL B-23932 / Pf-5).